The primary structure comprises 189 residues: Probable nicotinate-nucleotide adenylyltransferase (189 aa).

This sequence belongs to the NadD family.

The catalysed reaction is nicotinate beta-D-ribonucleotide + ATP + H(+) = deamido-NAD(+) + diphosphate. It functions in the pathway cofactor biosynthesis; NAD(+) biosynthesis; deamido-NAD(+) from nicotinate D-ribonucleotide: step 1/1. In terms of biological role, catalyzes the reversible adenylation of nicotinate mononucleotide (NaMN) to nicotinic acid adenine dinucleotide (NaAD). The sequence is that of Probable nicotinate-nucleotide adenylyltransferase from Caulobacter sp. (strain K31).